Reading from the N-terminus, the 163-residue chain is Nucleotide-binding protein ECA1137 (163 aa).

The protein belongs to the YajQ family.

Functionally, nucleotide-binding protein. This is Nucleotide-binding protein ECA1137 from Pectobacterium atrosepticum (strain SCRI 1043 / ATCC BAA-672) (Erwinia carotovora subsp. atroseptica).